Here is a 198-residue protein sequence, read N- to C-terminus: Nucleoside triphosphate pyrophosphatase (198 aa).

The active-site Proton acceptor is aspartate 72.

It belongs to the Maf family. A divalent metal cation is required as a cofactor.

Its subcellular location is the cytoplasm. It carries out the reaction a ribonucleoside 5'-triphosphate + H2O = a ribonucleoside 5'-phosphate + diphosphate + H(+). It catalyses the reaction a 2'-deoxyribonucleoside 5'-triphosphate + H2O = a 2'-deoxyribonucleoside 5'-phosphate + diphosphate + H(+). Its function is as follows. Nucleoside triphosphate pyrophosphatase. May have a dual role in cell division arrest and in preventing the incorporation of modified nucleotides into cellular nucleic acids. This Corynebacterium diphtheriae (strain ATCC 700971 / NCTC 13129 / Biotype gravis) protein is Nucleoside triphosphate pyrophosphatase.